The chain runs to 312 residues: MQGACISESQPWYLHFVCFIGFLFLLRVLFIPLLKWFTTRFLLTPKRLKRYGSWAMVTGATEGIGRAFAHELAKHGLNLILVSRNLSKLESVSDDFQQEFPHIKIKIIPFDFSSEGGYGAIEEGIKGLEVGILINNVGITYPRAMFFHEVDQLTWTKILRVNLEATTWVTRSLIGPMLHRRRGAIVNISSGAAVVVPSHPLYAIYAATKAYVDALSRSLHVEYKQFGIDVQCQVPLYVSTRMVSEVAAIDKPSLFVPSPEVYAKAAVAQIGIGSRCSPFWAHSLQWFLVGLVPDNLVDTWRLSIGLRRRSLS.

Residues 14 to 34 (LHFVCFIGFLFLLRVLFIPLL) traverse the membrane as a helical segment. Residue 52-81 (GSWAMVTGATEGIGRAFAHELAKHGLNLIL) participates in NADP(+) binding. A substrate-binding site is contributed by Ser-190. The active-site Proton acceptor is the Tyr-205.

This sequence belongs to the short-chain dehydrogenases/reductases (SDR) family. As to expression, expressed in green siliques, flowers, inflorescence stems and leaves. Not detected in roots.

Its subcellular location is the endoplasmic reticulum membrane. Probable reductase, but unlike KCR1, has no beta-ketoacyl-coenzyme A reductase activity. This chain is Very-long-chain 3-oxoacyl-CoA reductase-like protein At1g24470 (KCR2), found in Arabidopsis thaliana (Mouse-ear cress).